Reading from the N-terminus, the 440-residue chain is Ribosomal protein uS12 methylthiotransferase RimO (440 aa).

Positions 6–116 (PKVGFVSLGC…VVTAVHEVVP (111 aa)) constitute an MTTase N-terminal domain. The [4Fe-4S] cluster site is built by Cys-15, Cys-51, Cys-80, Cys-149, Cys-153, and Cys-156. Residues 135-373 (LTPRHYAYLK…MAHQQAISAA (239 aa)) form the Radical SAM core domain. The TRAM domain occupies 376 to 440 (QLKVGKEIEV…DEYDLWAELV (65 aa)).

This sequence belongs to the methylthiotransferase family. RimO subfamily. The cofactor is [4Fe-4S] cluster.

The protein localises to the cytoplasm. It carries out the reaction L-aspartate(89)-[ribosomal protein uS12]-hydrogen + (sulfur carrier)-SH + AH2 + 2 S-adenosyl-L-methionine = 3-methylsulfanyl-L-aspartate(89)-[ribosomal protein uS12]-hydrogen + (sulfur carrier)-H + 5'-deoxyadenosine + L-methionine + A + S-adenosyl-L-homocysteine + 2 H(+). In terms of biological role, catalyzes the methylthiolation of an aspartic acid residue of ribosomal protein uS12. The sequence is that of Ribosomal protein uS12 methylthiotransferase RimO from Pseudomonas aeruginosa (strain UCBPP-PA14).